Reading from the N-terminus, the 226-residue chain is Ras-related protein RABA4a (226 aa).

Position 2 is an N-acetylthreonine (T2). 24–31 (GDSAVGKS) lines the GTP pocket. Residues 46–54 (SKATIGVEF) carry the Effector region motif. Residues 72–76 (DTAGQ), 130–133 (NKSD), and 160–161 (SA) contribute to the GTP site. A disordered region spans residues 189–226 (ASEDQENGNPGSLAGKKIDIVPGPGQVIPNKSNMCCNS). The span at 217 to 226 (PNKSNMCCNS) shows a compositional bias: polar residues. S-geranylgeranyl cysteine attachment occurs at residues C223 and C224.

Belongs to the small GTPase superfamily. Rab family. As to quaternary structure, interacts with TCTP1.

It localises to the cell membrane. Intracellular vesicle trafficking and protein transport. In Arabidopsis thaliana (Mouse-ear cress), this protein is Ras-related protein RABA4a.